A 172-amino-acid chain; its full sequence is Methylated-DNA--protein-cysteine methyltransferase (172 aa).

The Nucleophile; methyl group acceptor role is filled by cysteine 142.

It belongs to the MGMT family.

Its subcellular location is the cytoplasm. The enzyme catalyses a 6-O-methyl-2'-deoxyguanosine in DNA + L-cysteinyl-[protein] = S-methyl-L-cysteinyl-[protein] + a 2'-deoxyguanosine in DNA. It carries out the reaction a 4-O-methyl-thymidine in DNA + L-cysteinyl-[protein] = a thymidine in DNA + S-methyl-L-cysteinyl-[protein]. In terms of biological role, involved in the cellular defense against the biological effects of O6-methylguanine (O6-MeG) and O4-methylthymine (O4-MeT) in DNA. Repairs the methylated nucleobase in DNA by stoichiometrically transferring the methyl group to a cysteine residue in the enzyme. This is a suicide reaction: the enzyme is irreversibly inactivated. In Pyrococcus horikoshii (strain ATCC 700860 / DSM 12428 / JCM 9974 / NBRC 100139 / OT-3), this protein is Methylated-DNA--protein-cysteine methyltransferase.